The following is a 425-amino-acid chain: Type I restriction enzyme MjaVIII specificity subunit (425 aa).

It belongs to the type-I restriction system S methylase family. In terms of assembly, the type I restriction/modification system is composed of three polypeptides R, M and S.

Functionally, the specificity (S) subunit of a type I restriction enzyme; this subunit dictates DNA sequence specificity. The M and S subunits together form a methyltransferase (MTase) that methylates A-2 on the top and A-3 on the bottom strand of the sequence 5'-GAYN(5)GTAA-3'. In the presence of the R subunit the complex can also act as an endonuclease, binding to the same target sequence but cutting the DNA some distance from this site. Whether the DNA is cut or modified depends on the methylation state of the target sequence. When the target site is unmodified, the DNA is cut. When the target site is hemimethylated, the complex acts as a maintenance MTase modifying the DNA so that both strands become methylated. After locating a non-methylated recognition site, the enzyme complex serves as a molecular motor that translocates DNA in an ATP-dependent manner until a collision occurs that triggers cleavage. The polypeptide is Type I restriction enzyme MjaVIII specificity subunit (Methanocaldococcus jannaschii (strain ATCC 43067 / DSM 2661 / JAL-1 / JCM 10045 / NBRC 100440) (Methanococcus jannaschii)).